A 406-amino-acid polypeptide reads, in one-letter code: MNLALGILEKRGFLKQCTNLEALSVLMDREKMVFYVGVDATSTSLHIGHLIPFMAMAHLQRQGHIPIALVGGGTTKIGDPSGKDVMRKILPKEDIEANVKAIKEQLLRIIDFSHGYIIDNSEWLDNINYIEFLRDIGVYFSVNRMLGFETYKRRLKDGLSFIEFNYQLLQSYDFYMLNKLKNCKLQIGGDDQWGNIVSGVDLVKRKLGTEVFGLTLPLITRSDGKKMGKSEKGAVYLDSKLYSVYDFYQYFRNVPDLDVKKFLYLFTFLEDDEIEHISSFQGYLLNKAKETLAFEITKIVHGESAALKASSAASAAFKGGEGDKSDIPFFKLALTSLEGTILLVDLMVSSKIVSSKSEARRLISSGGVYVDKVRIGDQNYCLNKDSFANGAIELRIGKKKILRIIL.

Tyr35 contributes to the L-tyrosine binding site. The 'HIGH' region signature appears at 40 to 49 (ATSTSLHIGH). Residues Tyr166 and Gln170 each contribute to the L-tyrosine site. The 'KMSKS' region motif lies at 226–230 (KMGKS). Lys229 contributes to the ATP binding site. The 65-residue stretch at 341–405 (ILLVDLMVSS…IGKKKILRII (65 aa)) folds into the S4 RNA-binding domain.

This sequence belongs to the class-I aminoacyl-tRNA synthetase family. TyrS type 1 subfamily. As to quaternary structure, homodimer.

It localises to the cytoplasm. It catalyses the reaction tRNA(Tyr) + L-tyrosine + ATP = L-tyrosyl-tRNA(Tyr) + AMP + diphosphate + H(+). Functionally, catalyzes the attachment of tyrosine to tRNA(Tyr) in a two-step reaction: tyrosine is first activated by ATP to form Tyr-AMP and then transferred to the acceptor end of tRNA(Tyr). This chain is Tyrosine--tRNA ligase, found in Borrelia hermsii (strain HS1 / DAH).